Consider the following 347-residue polypeptide: Isopentenyl-diphosphate delta-isomerase (347 aa).

9-10 (RK) is a binding site for substrate. FMN contacts are provided by residues 65-67 (AMT), Ser95, and Asn124. A substrate-binding site is contributed by 95-97 (STH). Residue Gln154 coordinates substrate. Mg(2+) is bound at residue Glu155. FMN-binding positions include Lys186, Ser211, Thr216, 262-264 (GVR), and 283-284 (SR).

This sequence belongs to the IPP isomerase type 2 family. As to quaternary structure, homooctamer. Dimer of tetramers. FMN serves as cofactor. Requires NADPH as cofactor. Mg(2+) is required as a cofactor.

It localises to the cytoplasm. The enzyme catalyses isopentenyl diphosphate = dimethylallyl diphosphate. Its function is as follows. Involved in the biosynthesis of isoprenoids. Catalyzes the 1,3-allylic rearrangement of the homoallylic substrate isopentenyl (IPP) to its allylic isomer, dimethylallyl diphosphate (DMAPP). The chain is Isopentenyl-diphosphate delta-isomerase from Staphylococcus saprophyticus subsp. saprophyticus (strain ATCC 15305 / DSM 20229 / NCIMB 8711 / NCTC 7292 / S-41).